Here is a 272-residue protein sequence, read N- to C-terminus: Lyso-glycine lipid O-acyltransferase (272 aa).

It belongs to the O-acyltransferase GlsA family.

It catalyses the reaction a lyso-glycine lipid + a fatty acyl-[ACP] = a glycine lipid + holo-[ACP]. The enzyme catalyses N-[(3R)-3-hydroxyhexadecanoyl]-glycine + hexadecanoyl-[ACP] = N-[(3R)-3-(hexadecanoyloxy)hexadecanoyl]-glycine + holo-[ACP]. It participates in lipid metabolism. Its function is as follows. Is involved in the production of glycine lipids (GL), which are phosphorus-free membrane lipids important for fitness during growth of the human gut bacterium B.thetaiotaomicron in vivo and in vitro. Catalyzes the second step of GL biosynthesis, i.e. the O-acylation of the hydroxyl group of lyso-glycine lipids, resulting in the production of the mature diacylated glycine lipids. The chain is Lyso-glycine lipid O-acyltransferase from Bacteroides thetaiotaomicron (strain ATCC 29148 / DSM 2079 / JCM 5827 / CCUG 10774 / NCTC 10582 / VPI-5482 / E50).